We begin with the raw amino-acid sequence, 794 residues long: Interphotoreceptor matrix proteoglycan 1 (794 aa).

The N-terminal stretch at 1–20 (MHLEAARVIFFLWIFLQVQG) is a signal peptide. The segment covering 202–213 (MTTAQRNPQLHP) has biased composition (polar residues). 3 disordered regions span residues 202-221 (MTTA…RVPT), 314-355 (KGKA…LYPT), and 413-449 (SPEL…AMTS). One can recognise an SEA 1 domain in the interval 236-357 (LEQKVELSIS…KQRELYPTAS (122 aa)). Positions 332–351 (NKIESEGDPRGTTEEEKQRE) are enriched in basic and acidic residues. 2 O-linked (GalNAc...) threonine glycosylation sites follow: threonine 425 and threonine 439. Residue serine 443 is glycosylated (O-linked (GalNAc...) serine). Threonine 448 and threonine 450 each carry an O-linked (GalNAc...) threonine glycan. One can recognise an SEA 2 domain in the interval 579–692 (RELVVFFSLR…YSLDVEPADQ (114 aa)). Asparagine 624 is a glycosylation site (N-linked (GlcNAc...) asparagine). The short motif at 629 to 637 (KQLEILNFR) is the Heparin- and hyaluronan-binding element. An N-linked (GlcNAc...) asparagine glycan is attached at asparagine 656.

In terms of processing, highly glycosylated (N- and O-linked carbohydrates and sialic acid).

It localises to the cell projection. It is found in the cilium. The protein resides in the photoreceptor outer segment. Its subcellular location is the secreted. The protein localises to the extracellular space. It localises to the extracellular matrix. It is found in the interphotoreceptor matrix. The protein resides in the photoreceptor inner segment. Functionally, chondroitin sulfate-, heparin- and hyaluronan-binding protein. May serve to form a basic macromolecular scaffold comprising the insoluble interphotoreceptor matrix. The polypeptide is Interphotoreceptor matrix proteoglycan 1 (IMPG1) (Bos taurus (Bovine)).